Reading from the N-terminus, the 337-residue chain is Schlafen family member 1 (337 aa).

The disordered stretch occupies residues 147–166 (AGGRSPSARPSDRPGDDTQE). A compositionally biased stretch (basic and acidic residues) spans 156–166 (PSDRPGDDTQE).

Belongs to the Schlafen family. As to quaternary structure, interacts with DNAJB6; promoting nuclear translocation and ability to promote cell-cycle arrest. In terms of tissue distribution, mainly expressed in the thymus, lymph node and spleen. Specifically expressed in T-lineage cells, but not in B-cells. Strongly up-regulated during the differentiation from CD4(+)CD8(+) double-positive (DP) to CD4(+) or CD8(+) single-positive (SP) thymocytes. Highly expressed in quiescent single-positive thymocytes and T-cells. The expression substantially decreases after TCR (T-cell receptor)-mediated activation.

It is found in the cytoplasm. Its subcellular location is the nucleus. Its function is as follows. Protein expressed in resting T-cells, which is required for maintaining T-cells in the quiescent state. Acts by promoting cell-cycle arrest of T-cells through inhibiting the expression of cyclin-D1 (CCND1). The protein is Schlafen family member 1 of Mus musculus (Mouse).